We begin with the raw amino-acid sequence, 378 residues long: Cobalt-precorrin-5B C(1)-methyltransferase (378 aa).

It belongs to the CbiD family.

It catalyses the reaction Co-precorrin-5B + S-adenosyl-L-methionine = Co-precorrin-6A + S-adenosyl-L-homocysteine. It participates in cofactor biosynthesis; adenosylcobalamin biosynthesis; cob(II)yrinate a,c-diamide from sirohydrochlorin (anaerobic route): step 6/10. In terms of biological role, catalyzes the methylation of C-1 in cobalt-precorrin-5B to form cobalt-precorrin-6A. The sequence is that of Cobalt-precorrin-5B C(1)-methyltransferase from Tolumonas auensis (strain DSM 9187 / NBRC 110442 / TA 4).